The following is a 622-amino-acid chain: Galactolipid galactosyltransferase SFR2, chloroplastic (622 aa).

Residues methionine 1–leucine 3 lie on the Stromal side of the membrane. Residues phenylalanine 4–valine 24 traverse the membrane as a helical; Signal-anchor segment. Over serine 25–aspartate 622 the chain is Cytoplasmic. A beta-D-glucoside-binding positions include histidine 222, asparagine 266–glutamate 267, tyrosine 377, glutamate 429, tryptophan 467, glutamate 474–tryptophan 475, and phenylalanine 483. Glutamate 267 serves as the catalytic Proton donor. Glutamate 429 serves as the catalytic Nucleophile.

It belongs to the glycosyl hydrolase 1 family. As to expression, expressed in hypocotyls, cotyledons, stems, leaves, pedicels, sepals, anthers and pistils. Limited expression in roots. Not detected in petals or filaments.

The protein localises to the plastid. The protein resides in the chloroplast. It localises to the chloroplast outer membrane. The enzyme catalyses 2 a 1,2-diacyl-3-O-(beta-D-galactosyl)-sn-glycerol = a 1,2-diacyl-3-O-[beta-D-galactosyl-(1-&gt;6)-beta-D-galactosyl]-sn-glycerol + a 1,2-diacyl-sn-glycerol. Induced by MgCl(2). In terms of biological role, glycosyl hydrolase family protein acting primarily as a highly specific galactosyltransferase. Synthesizes digalactosyldiacylglycerol from monogalactosyldiacylglycerol in the absence of UDP-galactose in vitro. Hydrolyzes o- and p-nitrophenyl beta-D-glucoside in vitro. Plays a role in freezing tolerance. May play a role in chloroplast protection. In Arabidopsis thaliana (Mouse-ear cress), this protein is Galactolipid galactosyltransferase SFR2, chloroplastic.